Reading from the N-terminus, the 209-residue chain is Inorganic pyrophosphatase (209 aa).

Substrate contacts are provided by Lys-38, Arg-52, and Tyr-64. 3 residues coordinate Mg(2+): Asp-92, Asp-97, and Asp-130. Tyr-167 is a binding site for substrate.

It belongs to the PPase family. In terms of assembly, homohexamer. The cofactor is Mg(2+).

The protein localises to the cytoplasm. It catalyses the reaction diphosphate + H2O = 2 phosphate + H(+). Catalyzes the hydrolysis of inorganic pyrophosphate (PPi) forming two phosphate ions. In Chlamydia trachomatis serovar L2 (strain ATCC VR-902B / DSM 19102 / 434/Bu), this protein is Inorganic pyrophosphatase.